Reading from the N-terminus, the 554-residue chain is ATP synthase subunit alpha (554 aa).

Residue 172–179 (GDRKTGKT) participates in ATP binding. The disordered stretch occupies residues 528–554 (LDEEELEKESVKVKKPAPEKKAKKEQK). Residues 535–554 (KESVKVKKPAPEKKAKKEQK) show a composition bias toward basic and acidic residues.

This sequence belongs to the ATPase alpha/beta chains family. In terms of assembly, F-type ATPases have 2 components, CF(1) - the catalytic core - and CF(0) - the membrane proton channel. CF(1) has five subunits: alpha(3), beta(3), gamma(1), delta(1), epsilon(1). CF(0) has three main subunits: a(1), b(2) and c(9-12). The alpha and beta chains form an alternating ring which encloses part of the gamma chain. CF(1) is attached to CF(0) by a central stalk formed by the gamma and epsilon chains, while a peripheral stalk is formed by the delta and b chains.

It localises to the cell membrane. It catalyses the reaction ATP + H2O + 4 H(+)(in) = ADP + phosphate + 5 H(+)(out). Produces ATP from ADP in the presence of a proton gradient across the membrane. The alpha chain is a regulatory subunit. The sequence is that of ATP synthase subunit alpha from Mycolicibacterium paratuberculosis (strain ATCC BAA-968 / K-10) (Mycobacterium paratuberculosis).